An 832-amino-acid chain; its full sequence is MDSITVKKPRLRLVCLQCKKIKRKCDKLRPACSRCQQNSLQCEYEERTDLSANVAANDSDGFNSSHKLNFEQQPVLERTGLRYSLQVPEGVVNATLSIWNAEDMLVIVGLVTFLDYPFAAHSLAQHDQYIRALCASLYGMALVDFSNYANGIPCEDTSRSILGPLSFIEKAIFRRIEHSKQFRVQSAALGLLYNAFSMEEENFSTLLPSLIAEVEDVLMQKKDCEILLRCFYQNIYPFYPFMDISLFESDLTSLLLQDDNNRWKISTEVKNVRKKIETLSLLTIVMAMALMHSKLDANLLSMVKENASESARKLSLLCHKLLCLLDVFRYPNENTFTCLLYFYVSEHLDPESPDCVLSPTNLLTLHHLLNLSMTLGLQYEPSKYKRFKDPEVIRQRRILWLGVQSLLFQISLAEGDAGKSNSEYMEAYLTDFEEYIEASSEYEKSSASESNVQMNDIVWNKYKFHVILSKLMSDCTSVIQHPQLFHILGNIKRSEDFMAENFPTSSIYQPLHEKEPNAIKVGKSTVLDVMDIQKTEIFLTNIVGSMCFLNIFDVLSLHFEKKCVMHWEEYEKNYHFLTLKSFNAYLKLAGLISDYLENKFQGNILESRGYIIDKQICFMLVRIWMFQCRILLRFSYKQESQKKLASSSISTNDNEKEDEMIVILERLIKHIRNQMAHLVDLAKGKLQDSYFGAYQTVPMFRYVVYLIDVGGLVSVTNGFWDKISSDGEIPPKVQQAVRLKWGLDCNNSRRIKQKLISSQSLQSFNQVLLCQMEDAVLSSSFAIKANTAMSQNTAEEFFNISEEEALNQLLENNNFDAFWDLLGENLSDMPSL.

A DNA-binding region (zn(2)-C6 fungal-type) is located at residues 15–42 (CLQCKKIKRKCDKLRPACSRCQQNSLQC).

It localises to the nucleus. Functionally, zinc cluster transcription factor involved in resistance to cycloheximide. This is Regulator of drug sensitivity 1 (RDS1) from Saccharomyces cerevisiae (strain ATCC 204508 / S288c) (Baker's yeast).